The following is a 31-amino-acid chain: Cytochrome b6-f complex subunit 6 (31 aa).

Residues 3-23 (VFLGYIIFLAAFFGLATGLFL) traverse the membrane as a helical segment.

The protein belongs to the PetL family. As to quaternary structure, the 4 large subunits of the cytochrome b6-f complex are cytochrome b6, subunit IV (17 kDa polypeptide, PetD), cytochrome f and the Rieske protein, while the 4 small subunits are PetG, PetL, PetM and PetN. The complex functions as a dimer.

The protein resides in the plastid. It is found in the chloroplast thylakoid membrane. In terms of biological role, component of the cytochrome b6-f complex, which mediates electron transfer between photosystem II (PSII) and photosystem I (PSI), cyclic electron flow around PSI, and state transitions. PetL is important for photoautotrophic growth as well as for electron transfer efficiency and stability of the cytochrome b6-f complex. This is Cytochrome b6-f complex subunit 6 from Pyropia yezoensis (Susabi-nori).